Here is a 1009-residue protein sequence, read N- to C-terminus: Probable beta-galactosidase B (1009 aa).

The N-terminal stretch at 1-27 (MKTIAGLSWISALSSLASLPNGLGVSA) is a signal peptide. Tyr96 lines the substrate pocket. An N-linked (GlcNAc...) asparagine glycan is attached at Asn106. Positions 141, 142, 143, and 201 each coordinate substrate. Glu202 acts as the Proton donor in catalysis. Tyr271 lines the substrate pocket. A disulfide bridge links Cys277 with Cys330. Glu314 acts as the Nucleophile in catalysis. Tyr379 contributes to the substrate binding site. N-linked (GlcNAc...) asparagine glycosylation is found at Asn467, Asn495, Asn547, Asn593, Asn632, Asn672, Asn707, Asn775, Asn782, Asn789, Asn795, and Asn914.

Belongs to the glycosyl hydrolase 35 family.

Its subcellular location is the secreted. The catalysed reaction is Hydrolysis of terminal non-reducing beta-D-galactose residues in beta-D-galactosides.. Functionally, cleaves beta-linked terminal galactosyl residues from gangliosides, glycoproteins, and glycosaminoglycans. The polypeptide is Probable beta-galactosidase B (lacB) (Pyrenophora tritici-repentis (strain Pt-1C-BFP) (Wheat tan spot fungus)).